A 130-amino-acid chain; its full sequence is Riboflavin kinase (130 aa).

10–15 lines the CDP pocket; the sequence is GFGEGK. Residues Thr39 and Asn41 each coordinate Mg(2+). 2 residues coordinate FMN: Thr96 and Glu104. Position 109–112 (109–112) interacts with CDP; that stretch reads VNLR.

The protein belongs to the archaeal riboflavin kinase family. Mg(2+) is required as a cofactor.

It catalyses the reaction riboflavin + CTP = CDP + FMN + H(+). The protein operates within cofactor biosynthesis; FMN biosynthesis; FMN from riboflavin (CTP route): step 1/1. Functionally, catalyzes the CTP-dependent phosphorylation of riboflavin (vitamin B2) to form flavin mononucleotide (FMN). This Methanococcus vannielii (strain ATCC 35089 / DSM 1224 / JCM 13029 / OCM 148 / SB) protein is Riboflavin kinase.